Here is an 80-residue protein sequence, read N- to C-terminus: Exodeoxyribonuclease 7 small subunit (80 aa).

The protein belongs to the XseB family. As to quaternary structure, heterooligomer composed of large and small subunits.

It localises to the cytoplasm. It catalyses the reaction Exonucleolytic cleavage in either 5'- to 3'- or 3'- to 5'-direction to yield nucleoside 5'-phosphates.. In terms of biological role, bidirectionally degrades single-stranded DNA into large acid-insoluble oligonucleotides, which are then degraded further into small acid-soluble oligonucleotides. In Caulobacter sp. (strain K31), this protein is Exodeoxyribonuclease 7 small subunit.